A 425-amino-acid polypeptide reads, in one-letter code: Histidinol dehydrogenase (425 aa).

Residues tyrosine 124, glutamine 184, and asparagine 207 each coordinate NAD(+). Residues serine 230, glutamine 252, and histidine 255 each contribute to the substrate site. Zn(2+) contacts are provided by glutamine 252 and histidine 255. Residues glutamate 321 and histidine 322 each act as proton acceptor in the active site. Substrate is bound by residues histidine 322, aspartate 355, glutamate 409, and histidine 414. Zn(2+) is bound at residue aspartate 355. Zn(2+) is bound at residue histidine 414.

It belongs to the histidinol dehydrogenase family. Requires Zn(2+) as cofactor.

It catalyses the reaction L-histidinol + 2 NAD(+) + H2O = L-histidine + 2 NADH + 3 H(+). It participates in amino-acid biosynthesis; L-histidine biosynthesis; L-histidine from 5-phospho-alpha-D-ribose 1-diphosphate: step 9/9. Functionally, catalyzes the sequential NAD-dependent oxidations of L-histidinol to L-histidinaldehyde and then to L-histidine. This Halobacterium salinarum (strain ATCC 700922 / JCM 11081 / NRC-1) (Halobacterium halobium) protein is Histidinol dehydrogenase.